The primary structure comprises 695 residues: Polyribonucleotide nucleotidyltransferase (695 aa).

D488 and D494 together coordinate Mg(2+). A KH domain is found at P554–V613. One can recognise an S1 motif domain in the interval G623–K690.

It belongs to the polyribonucleotide nucleotidyltransferase family. As to quaternary structure, component of the RNA degradosome, which is a multiprotein complex involved in RNA processing and mRNA degradation. Mg(2+) is required as a cofactor.

The protein resides in the cytoplasm. It carries out the reaction RNA(n+1) + phosphate = RNA(n) + a ribonucleoside 5'-diphosphate. Functionally, involved in mRNA degradation. Catalyzes the phosphorolysis of single-stranded polyribonucleotides processively in the 3'- to 5'-direction. In Ruthia magnifica subsp. Calyptogena magnifica, this protein is Polyribonucleotide nucleotidyltransferase.